The chain runs to 315 residues: Homoserine kinase (315 aa).

97–107 (PPARGLGSSAT) contacts ATP.

It belongs to the GHMP kinase family. Homoserine kinase subfamily.

The protein resides in the cytoplasm. It carries out the reaction L-homoserine + ATP = O-phospho-L-homoserine + ADP + H(+). The protein operates within amino-acid biosynthesis; L-threonine biosynthesis; L-threonine from L-aspartate: step 4/5. Catalyzes the ATP-dependent phosphorylation of L-homoserine to L-homoserine phosphate. This Parasynechococcus marenigrum (strain WH8102) protein is Homoserine kinase.